Here is a 98-residue protein sequence, read N- to C-terminus: Sm-like protein LSM3B (98 aa).

An N-acetylserine modification is found at S2. The region spanning 11 to 96 is the Sm domain; the sequence is EPLDLIRLSL…VILVSPPLRT (86 aa).

The protein belongs to the snRNP Sm proteins family. In terms of assembly, component of the heptameric LSM1-LSM7 complex that forms a seven-membered ring structure with a donut shape. The LSM subunits are arranged in the order LSM1, LSM2, LSM3, LSM6, LSM5, LSM7 and LSM4. Component of the heptameric LSM2-LSM8 complex that forms a seven-membered ring structure with a donut shape. The LSM subunits are arranged in the order LSM8, LSM2, LSM3, LSM6, LSM5, LSM7 and LSM4. LSM3B subunit interacts only with its two neighboring subunits, LSM2 and LSM6A or LSM6B. As to expression, expressed in roots, leaves, stems, flowers and siliques.

It is found in the cytoplasm. It localises to the nucleus. In terms of biological role, component of LSM protein complexes, which are involved in RNA processing. Component of the cytoplasmic LSM1-LSM7 complex which is involved in mRNA degradation by promoting decapping and leading to accurate 5'-3' mRNA decay. The cytoplasmic LSM1-LSM7 complex regulates developmental gene expression by the decapping of specific development-related transcripts. Component of the nuclear LSM2-LSM8 complex which is involved splicing nuclear mRNAs. LSM2-LSM8 binds directly to the U6 small nuclear RNAs (snRNAs) and is essential for accurate splicing of selected development-related mRNAs through the stabilization of the spliceosomal U6 snRNA. Plays a critical role in the regulation of development-related gene expression. The sequence is that of Sm-like protein LSM3B from Arabidopsis thaliana (Mouse-ear cress).